We begin with the raw amino-acid sequence, 127 residues long: UPF0325 protein VIBHAR_03240 (127 aa).

It belongs to the UPF0325 family.

The sequence is that of UPF0325 protein VIBHAR_03240 from Vibrio campbellii (strain ATCC BAA-1116).